The sequence spans 273 residues: Large ribosomal subunit protein uL2 (273 aa).

The segment at glycine 196–lysine 273 is disordered. Basic residues-rich tracts occupy residues glycine 209–asparagine 220 and leucine 255–serine 264.

This sequence belongs to the universal ribosomal protein uL2 family. As to quaternary structure, part of the 50S ribosomal subunit. Forms a bridge to the 30S subunit in the 70S ribosome.

In terms of biological role, one of the primary rRNA binding proteins. Required for association of the 30S and 50S subunits to form the 70S ribosome, for tRNA binding and peptide bond formation. It has been suggested to have peptidyltransferase activity; this is somewhat controversial. Makes several contacts with the 16S rRNA in the 70S ribosome. In Phocaeicola vulgatus (strain ATCC 8482 / DSM 1447 / JCM 5826 / CCUG 4940 / NBRC 14291 / NCTC 11154) (Bacteroides vulgatus), this protein is Large ribosomal subunit protein uL2.